The primary structure comprises 340 residues: uncharacterized protein (340 aa).

2 consecutive transmembrane segments (helical) span residues 162-182 (PLVP…VLAG) and 239-259 (FWIS…IVVP).

It is found in the cell membrane. This is an uncharacterized protein from Mycobacterium bovis (strain ATCC BAA-935 / AF2122/97).